Here is a 349-residue protein sequence, read N- to C-terminus: 3-isopropylmalate dehydrogenase (349 aa).

Residues R91, R101, R129, and D219 each coordinate substrate. Mg(2+) is bound by residues D219, D243, and D247. 277 to 289 (GSAPDIAGLGKAN) contributes to the NAD(+) binding site.

The protein belongs to the isocitrate and isopropylmalate dehydrogenases family. LeuB type 1 subfamily. Homodimer. Mg(2+) serves as cofactor. Requires Mn(2+) as cofactor.

The protein resides in the cytoplasm. The catalysed reaction is (2R,3S)-3-isopropylmalate + NAD(+) = 4-methyl-2-oxopentanoate + CO2 + NADH. The protein operates within amino-acid biosynthesis; L-leucine biosynthesis; L-leucine from 3-methyl-2-oxobutanoate: step 3/4. In terms of biological role, catalyzes the oxidation of 3-carboxy-2-hydroxy-4-methylpentanoate (3-isopropylmalate) to 3-carboxy-4-methyl-2-oxopentanoate. The product decarboxylates to 4-methyl-2 oxopentanoate. The sequence is that of 3-isopropylmalate dehydrogenase from Zymomonas mobilis subsp. mobilis (strain ATCC 31821 / ZM4 / CP4).